Consider the following 361-residue polypeptide: Glyceraldehyde-3-phosphate dehydrogenase, glycosomal (361 aa).

NAD(+) contacts are provided by residues 13-14 (RI), aspartate 39, and arginine 93. D-glyceraldehyde 3-phosphate contacts are provided by residues 166–168 (SCT), threonine 198, 227–228 (TG), and arginine 250. Cysteine 167 acts as the Nucleophile in catalysis. NAD(+) is bound at residue asparagine 336. Residues 359-361 (SKL) carry the Microbody targeting signal motif.

The protein belongs to the glyceraldehyde-3-phosphate dehydrogenase family. In terms of assembly, homotetramer.

It localises to the glycosome. It catalyses the reaction D-glyceraldehyde 3-phosphate + phosphate + NAD(+) = (2R)-3-phospho-glyceroyl phosphate + NADH + H(+). It participates in carbohydrate degradation; glycolysis; pyruvate from D-glyceraldehyde 3-phosphate: step 1/5. In Crithidia fasciculata, this protein is Glyceraldehyde-3-phosphate dehydrogenase, glycosomal (GAPDG).